The following is a 189-amino-acid chain: MSVTTEARPVPRLKQRYREEIAPALREEFSYGNVMQIPGVVKVVVNMGVGDAARDAKLIDGATRDLAAITGQKPAVRRAKKSIAQFKLREGQPIGAKVTLRGDRMWEFLDRLVTIALPRIRDFRGLSPKQFDGAGNYTFGVIEQSIFHEIDIDRIDRVRGMDITVVTTATNDDEGRALLRALGFPFRES.

Belongs to the universal ribosomal protein uL5 family. As to quaternary structure, part of the 50S ribosomal subunit; part of the 5S rRNA/L5/L18/L25 subcomplex. Contacts the 5S rRNA and the P site tRNA. Forms a bridge to the 30S subunit in the 70S ribosome.

In terms of biological role, this is one of the proteins that bind and probably mediate the attachment of the 5S RNA into the large ribosomal subunit, where it forms part of the central protuberance. In the 70S ribosome it contacts protein S13 of the 30S subunit (bridge B1b), connecting the 2 subunits; this bridge is implicated in subunit movement. Contacts the P site tRNA; the 5S rRNA and some of its associated proteins might help stabilize positioning of ribosome-bound tRNAs. In Parafrankia sp. (strain EAN1pec), this protein is Large ribosomal subunit protein uL5.